A 646-amino-acid chain; its full sequence is Leukotriene A-4 hydrolase homolog (646 aa).

A peptide contacts are provided by residues 172 to 174 (QCQ) and 307 to 312 (PYGGME). His-336 is a Zn(2+) binding site. Glu-337 serves as the catalytic Proton acceptor. Zn(2+) is bound by residues His-340 and Glu-359. Tyr-424 acts as the Proton donor in catalysis.

This sequence belongs to the peptidase M1 family. Requires Zn(2+) as cofactor.

The protein localises to the cytoplasm. It is found in the nucleus. The enzyme catalyses leukotriene A4 + H2O = leukotriene B4. The protein operates within lipid metabolism; leukotriene B4 biosynthesis. Aminopeptidase that preferentially cleaves tripeptides. Also has low epoxide hydrolase activity (in vitro). Can hydrolyze an epoxide moiety of LTA(4) to form LTB(4) (in vitro). The polypeptide is Leukotriene A-4 hydrolase homolog (Botryotinia fuckeliana (strain B05.10) (Noble rot fungus)).